The primary structure comprises 139 residues: D-ribose pyranase (139 aa).

His20 functions as the Proton donor in the catalytic mechanism. Residues Asp28, His106, and 128-130 contribute to the substrate site; that span reads YAN.

This sequence belongs to the RbsD / FucU family. RbsD subfamily. Homodecamer.

The protein localises to the cytoplasm. The enzyme catalyses beta-D-ribopyranose = beta-D-ribofuranose. Its pathway is carbohydrate metabolism; D-ribose degradation; D-ribose 5-phosphate from beta-D-ribopyranose: step 1/2. Catalyzes the interconversion of beta-pyran and beta-furan forms of D-ribose. This Citrobacter koseri (strain ATCC BAA-895 / CDC 4225-83 / SGSC4696) protein is D-ribose pyranase.